A 520-amino-acid chain; its full sequence is Protein nucleotidyltransferase YdiU (520 aa).

Residues Gly-108, Gly-110, Arg-111, Lys-130, Asp-142, Gly-143, Arg-193, and Arg-200 each coordinate ATP. Residue Asp-269 is the Proton acceptor of the active site. Residues Asn-270 and Asp-279 each coordinate Mg(2+). Position 279 (Asp-279) interacts with ATP.

This sequence belongs to the SELO family. The cofactor is Mg(2+). Mn(2+) is required as a cofactor.

The enzyme catalyses L-seryl-[protein] + ATP = 3-O-(5'-adenylyl)-L-seryl-[protein] + diphosphate. The catalysed reaction is L-threonyl-[protein] + ATP = 3-O-(5'-adenylyl)-L-threonyl-[protein] + diphosphate. It carries out the reaction L-tyrosyl-[protein] + ATP = O-(5'-adenylyl)-L-tyrosyl-[protein] + diphosphate. It catalyses the reaction L-histidyl-[protein] + UTP = N(tele)-(5'-uridylyl)-L-histidyl-[protein] + diphosphate. The enzyme catalyses L-seryl-[protein] + UTP = O-(5'-uridylyl)-L-seryl-[protein] + diphosphate. The catalysed reaction is L-tyrosyl-[protein] + UTP = O-(5'-uridylyl)-L-tyrosyl-[protein] + diphosphate. Functionally, nucleotidyltransferase involved in the post-translational modification of proteins. It can catalyze the addition of adenosine monophosphate (AMP) or uridine monophosphate (UMP) to a protein, resulting in modifications known as AMPylation and UMPylation. The sequence is that of Protein nucleotidyltransferase YdiU from Cupriavidus pinatubonensis (strain JMP 134 / LMG 1197) (Cupriavidus necator (strain JMP 134)).